The sequence spans 302 residues: Elongation factor Ts (302 aa).

The involved in Mg(2+) ion dislocation from EF-Tu stretch occupies residues 82-85 (TDFV).

It belongs to the EF-Ts family.

Its subcellular location is the cytoplasm. Functionally, associates with the EF-Tu.GDP complex and induces the exchange of GDP to GTP. It remains bound to the aminoacyl-tRNA.EF-Tu.GTP complex up to the GTP hydrolysis stage on the ribosome. The protein is Elongation factor Ts of Nitrosospira multiformis (strain ATCC 25196 / NCIMB 11849 / C 71).